A 384-amino-acid polypeptide reads, in one-letter code: 5-amino-6-(D-ribitylamino)uracil--L-tyrosine 4-hydroxyphenyl transferase 2 (384 aa).

The region spanning 53-286 is the Radical SAM core domain; the sequence is VSYVVNRNIY…IAISRVILHT (234 aa). [4Fe-4S] cluster contacts are provided by Cys67, Cys71, and Cys74.

This sequence belongs to the radical SAM superfamily. CofH family. As to quaternary structure, consists of two subunits, CofG and CofH. [4Fe-4S] cluster is required as a cofactor.

It catalyses the reaction 5-amino-6-(D-ribitylamino)uracil + L-tyrosine + S-adenosyl-L-methionine = 5-amino-5-(4-hydroxybenzyl)-6-(D-ribitylimino)-5,6-dihydrouracil + 2-iminoacetate + 5'-deoxyadenosine + L-methionine + H(+). It functions in the pathway cofactor biosynthesis; coenzyme F0 biosynthesis. Functionally, catalyzes the radical-mediated synthesis of 5-amino-5-(4-hydroxybenzyl)-6-(D-ribitylimino)-5,6-dihydrouracil from 5-amino-6-(D-ribitylamino)uracil and L-tyrosine. The sequence is that of 5-amino-6-(D-ribitylamino)uracil--L-tyrosine 4-hydroxyphenyl transferase 2 from Methanosarcina mazei (strain ATCC BAA-159 / DSM 3647 / Goe1 / Go1 / JCM 11833 / OCM 88) (Methanosarcina frisia).